The primary structure comprises 412 residues: Putative competence-damage inducible protein (412 aa).

Belongs to the CinA family.

This Bacillus cereus (strain ATCC 10987 / NRS 248) protein is Putative competence-damage inducible protein.